Consider the following 283-residue polypeptide: Pantothenate synthetase (283 aa).

30–37 contacts ATP; sequence MGNLHDGH. H37 serves as the catalytic Proton donor. (R)-pantoate is bound at residue Q61. A beta-alanine-binding site is contributed by Q61. 149–152 provides a ligand contact to ATP; sequence GEKD. Q155 contacts (R)-pantoate. 186-189 lines the ATP pocket; the sequence is LSSR.

Belongs to the pantothenate synthetase family. Homodimer.

It localises to the cytoplasm. It carries out the reaction (R)-pantoate + beta-alanine + ATP = (R)-pantothenate + AMP + diphosphate + H(+). It participates in cofactor biosynthesis; (R)-pantothenate biosynthesis; (R)-pantothenate from (R)-pantoate and beta-alanine: step 1/1. Catalyzes the condensation of pantoate with beta-alanine in an ATP-dependent reaction via a pantoyl-adenylate intermediate. The chain is Pantothenate synthetase from Escherichia coli O127:H6 (strain E2348/69 / EPEC).